Consider the following 406-residue polypeptide: Argininosuccinate synthase (406 aa).

Residue 8–16 (AYSGGLDTS) participates in ATP binding. Residue Tyr86 coordinates L-citrulline. Gly116 provides a ligand contact to ATP. Thr118, Asn122, and Asp123 together coordinate L-aspartate. Asn122 is a binding site for L-citrulline. Positions 126, 174, 183, 259, and 271 each coordinate L-citrulline.

This sequence belongs to the argininosuccinate synthase family. Type 1 subfamily. Homotetramer.

It localises to the cytoplasm. The enzyme catalyses L-citrulline + L-aspartate + ATP = 2-(N(omega)-L-arginino)succinate + AMP + diphosphate + H(+). The protein operates within amino-acid biosynthesis; L-arginine biosynthesis; L-arginine from L-ornithine and carbamoyl phosphate: step 2/3. The chain is Argininosuccinate synthase from Dehalococcoides mccartyi (strain ATCC BAA-2100 / JCM 16839 / KCTC 5957 / BAV1).